We begin with the raw amino-acid sequence, 535 residues long: High affinity immunoglobulin alpha and immunoglobulin mu Fc receptor (535 aa).

The N-terminal stretch at Met-1–Ser-35 is a signal peptide. The Extracellular segment spans residues Met-36–Arg-455. The mediates immunoglobulin Fc fragment-binding stretch occupies residues Gly-95 to Trp-117. The 95-residue stretch at Gly-95–Thr-189 folds into the Ig-like V-type domain. Cys-102 and Cys-173 form a disulfide bridge. N-linked (GlcNAc...) asparagine glycosylation is present at Asn-187. Disordered stretches follow at residues Ala-201–Glu-360 and Glu-405–Val-430. Low complexity-rich tracts occupy residues Pro-208–Gly-220 and Thr-241–Ser-253. A compositionally biased stretch (polar residues) spans Lys-291–Glu-328. Residues Asp-330–Arg-346 show a composition bias toward basic and acidic residues. Polar residues predominate over residues Leu-413 to Ser-429. The chain crosses the membrane as a helical span at residues Ile-456–Lys-476. Residues Arg-477 to Pro-535 are Cytoplasmic-facing. The interval Leu-507–Pro-535 is disordered. Residues Asn-513–Val-528 are compositionally biased toward polar residues.

Interacts with IGHM; this interaction facilitates the endocytosis of IgM-coated microbes and IgM-antigen immune complexes. Post-translationally, N-glycosylated. Expressed in several tissues including thymus, spleen, liver, kidney, small and large intestine, testis and placenta. Expressed by oligodendrocytes, B-cells and macrophages but not granulocytes, T-cells or NK cells (at protein level).

It localises to the cell membrane. Its function is as follows. Functions as a receptor for the Fc fragment of IgA and IgM. Binds IgA and IgM with high affinity and mediates their endocytosis. May function in the immune response to microbes mediated by IgA and IgM. The sequence is that of High affinity immunoglobulin alpha and immunoglobulin mu Fc receptor (Fcamr) from Mus musculus (Mouse).